Consider the following 178-residue polypeptide: ATP-dependent protease subunit HslV (178 aa).

Residue Thr-8 is part of the active site. The Na(+) site is built by Gly-163, Cys-166, and Thr-169.

Belongs to the peptidase T1B family. HslV subfamily. In terms of assembly, a double ring-shaped homohexamer of HslV is capped on each side by a ring-shaped HslU homohexamer. The assembly of the HslU/HslV complex is dependent on binding of ATP.

It is found in the cytoplasm. It catalyses the reaction ATP-dependent cleavage of peptide bonds with broad specificity.. Allosterically activated by HslU binding. Protease subunit of a proteasome-like degradation complex believed to be a general protein degrading machinery. The sequence is that of ATP-dependent protease subunit HslV from Treponema denticola (strain ATCC 35405 / DSM 14222 / CIP 103919 / JCM 8153 / KCTC 15104).